The primary structure comprises 1321 residues: Bile salt export pump (1321 aa).

Topologically, residues 1 to 62 are cytoplasmic; it reads MSDSVILRSV…FSSSKDNWLM (62 aa). In terms of domain architecture, ABC transmembrane type-1 1 spans 62–385; sequence MFMGSVCALL…ASSCLEIFST (324 aa). The chain crosses the membrane as a helical span at residues 63–83; the sequence is FMGSVCALLHGMAQPGMIIVF. The Extracellular portion of the chain corresponds to 84-147; sequence GILTDIFVEY…VIKFSGIYAG (64 aa). N109, N116, N122, and N125 each carry an N-linked (GlcNAc...) asparagine glycan. The helical transmembrane segment at 148-168 threads the bilayer; the sequence is VGVAVLILGYFQIRLWVITGA. Residues 169-215 lie on the Cytoplasmic side of the membrane; sequence RQIRKMRKFYFRRIMRMEIGWFDCTSVGELNSRFSDDINKIDEAIAD. The chain crosses the membrane as a helical span at residues 216–236; sequence QMALFLQRLSTALSGLLLGFY. The Extracellular segment spans residues 237 to 240; that stretch reads RGWK. The chain crosses the membrane as a helical span at residues 241 to 261; it reads LTLVILAVSPLIGIGAAVIGL. Topologically, residues 262 to 319 are cytoplasmic; it reads SVAKFTELELKAYAKAGSIADEVLSSIRTVAAFGGENKEVERYEKNLMFAQRWGIWKG. Residues 320-340 traverse the membrane as a helical segment; sequence MVMGFFTGYMWCLIFFCYALA. At 341 to 353 the chain is on the extracellular side; that stretch reads FWYGSRLVLDEGE. Residues 354–374 form a helical membrane-spanning segment; the sequence is YTPGTLIQIFLCVIIAAMNIG. The Cytoplasmic segment spans residues 375 to 755; that stretch reads NASSCLEIFS…KYNISEWPYI (381 aa). An ABC transporter 1 domain is found at 420–656; it reads IEFHNVTFHY…KGVYFMLVTL (237 aa). 455–462 serves as a coordination point for ATP; sequence GSSGAGKS. Residue T586 is modified to Phosphothreonine. S587 is modified (phosphoserine). Positions 651–674 are interaction with HAX1; sequence FMLVTLQSQEDNTHKETGIKGKDT. A compositionally biased stretch (basic and acidic residues) spans 662–684; sequence NTHKETGIKGKDTTEGDTPERTF. The interval 662-722 is disordered; sequence NTHKETGIKG…PLAIGDHKSS (61 aa). 3 positions are modified to phosphoserine: S692, S703, and S706. Positions 755–1043 constitute an ABC transmembrane type-1 2 domain; the sequence is ILVGALCAAI…TFSYTPSYAK (289 aa). A helical membrane pass occupies residues 756 to 776; that stretch reads LVGALCAAINGAVTPIYSLLF. The Extracellular portion of the chain corresponds to 777–794; that stretch reads SQILKTFSLVDKEQQRSE. Residues 795 to 815 traverse the membrane as a helical segment; the sequence is IYSMCLFFVILGCVSLFTQFL. The Cytoplasmic portion of the chain corresponds to 816 to 869; that stretch reads QGYNFAKSGELLTKRLRKFGFKAMLRQDIGWFDDLKNNPGVLTTRLATDASQVQ. The next 2 membrane-spanning stretches (helical) occupy residues 870 to 890 and 891 to 911; these read GATGSQVGMMVNSFTNIFVAV and LIAFLFNWKLSLVISVFFPFL. The Cytoplasmic segment spans residues 912–979; sequence ALSGAVQTKM…SYKTAIRKAN (68 aa). The chain crosses the membrane as a helical span at residues 980 to 1000; the sequence is VYGLCYAFSQGISFLANSAAY. The Extracellular segment spans residues 1001 to 1011; the sequence is RYGGYLIVYED. Residues 1012–1032 traverse the membrane as a helical segment; that stretch reads LNFSYVFRVVSSIAMSATAVG. Over 1033–1321 the chain is Cytoplasmic; sequence RTFSYTPSYA…KLVITGAPIS (289 aa). Residues 1078 to 1316 enclose the ABC transporter 2 domain; sequence IDFIDCKFTY…KGAYYKLVIT (239 aa). Residue 1113–1120 coordinates ATP; that stretch reads GSSGCGKS. Position 1321 is a phosphoserine (S1321).

The protein belongs to the ABC transporter superfamily. ABCB family. Multidrug resistance exporter (TC 3.A.1.201) subfamily. As to quaternary structure, interacts with HAX1. Interacts with the adapter protein complex 2 (AP-2) throught AP2A2 or AP2A1; this interaction regulates cell membrane expression of ABCB11 through its internalization in a clathrin-dependent manner and its subsequent degradation. N-glycosylated. Post-translationally, ubiquitinated; short-chain ubiquitination regulates cell-Surface expression of ABCB11. Expressed predominantly, if not exclusively in the liver, where it was further localized to the canalicular microvilli and to subcanalicular vesicles of the hepatocytes by in situ.

It is found in the apical cell membrane. It localises to the recycling endosome membrane. The protein localises to the endosome. The protein resides in the cell membrane. It catalyses the reaction cholate(in) + ATP + H2O = cholate(out) + ADP + phosphate + H(+). The catalysed reaction is taurocholate(in) + ATP + H2O = taurocholate(out) + ADP + phosphate + H(+). The enzyme catalyses glycocholate(in) + ATP + H2O = glycocholate(out) + ADP + phosphate + H(+). It carries out the reaction glycochenodeoxycholate(in) + ATP + H2O = glycochenodeoxycholate(out) + ADP + phosphate + H(+). It catalyses the reaction taurochenodeoxycholate(in) + ATP + H2O = taurochenodeoxycholate(out) + ADP + phosphate + H(+). The catalysed reaction is glycoursodeoxycholate(in) + ATP + H2O = glycoursodeoxycholate(out) + ADP + phosphate + H(+). The enzyme catalyses tauroursodeoxycholate(in) + ATP + H2O = tauroursodeoxycholate(out) + ADP + phosphate + H(+). It carries out the reaction taurodeoxycholate(in) + ATP + H2O = taurodeoxycholate(out) + ADP + phosphate + H(+). It catalyses the reaction taurolithocholate 3-sulfate(in) + ATP + H2O = taurolithocholate 3-sulfate(out) + ADP + phosphate + H(+). The catalysed reaction is pravastatin(in) + ATP + H2O = pravastatin(out) + ADP + phosphate + H(+). The uptake of taurocholate is inhibited by taurolithocholate sulfate with an IC(50) of 9 uM. Pravastatin competitively inhibits the transport of taurocholic acid. Cyclosporin A, glibenclamide, rifampicin and troglitazonestrongly competitively inhibit the transport activity of taurocholate. The canalicular transport activity of taurocholate is strongly dependent on canalicular membrane cholesterol content. The uptake of taurocholate is increased by short- and medium-chain fatty acids. Cholesterol increases transport capacity of taurocholate without affecting the affinity for the substrate. In terms of biological role, catalyzes the transport of the major hydrophobic bile salts, such as taurine and glycine-conjugated cholic acid across the canalicular membrane of hepatocytes in an ATP-dependent manner, therefore participates in hepatic bile acid homeostasis and consequently to lipid homeostasis through regulation of biliary lipid secretion in a bile salts dependent manner. Transports taurine-conjugated bile salts more rapidly than glycine-conjugated bile salts. Also transports non-bile acid compounds, such as pravastatin and fexofenadine in an ATP-dependent manner and may be involved in their biliary excretion. This Mus musculus (Mouse) protein is Bile salt export pump.